Here is a 511-residue protein sequence, read N- to C-terminus: MSKHTLSADVPVVSMDAITKTFPGVKALDQVRLDLYPGQVTALVGENGAGKSTTVKILTGIYQPDGGTIRIAGAPVILNTPNDASAAGITAIHQETVLFDELTVAENIFIGHAPRTKWGLIDKAAMHRKARGLLDEIGAPFDTGAYLRELGIANKHLVAIARALSVDARVVIMDEPTAALSHKEIEELYELVETLKAQGKAILFISHKFDEIFRIADRYTVFRDGAFVSDGLISDIDQDALVKMMVGRAVDHIFPERQAALGEEVLQVAGYAHPTEFAGIGFTLKRGEILGFYGLVGAGRSELMQALFGITRPSKGVTKINGDIRVIRSPADAVNNGIVYVPEDRGKQGVVIGLPIFQNITLPSLGRTSQSGFLRMAEEFKLARDYAERLDLRAAALDQDVGNLSGGNQQKVVIAKWLATQPQVIILDEPTKGIDIGSKAAVHEFMAELAGQGLAVIMVSSEIPEVIGMSDRVIVMREGRIAAEVQGEDLTPETLVRHAAGIAPAPESIPA.

2 consecutive ABC transporter domains span residues 13–249 (VSMD…VGRA) and 260–503 (ALGE…AGIA). 45 to 52 (GENGAGKS) contributes to the ATP binding site.

The protein belongs to the ABC transporter superfamily. Ribose importer (TC 3.A.1.2.1) family. The complex is composed of an ATP-binding protein (RbsA), two transmembrane proteins (RbsC) and a solute-binding protein (RbsB).

The protein resides in the cell inner membrane. It catalyses the reaction D-ribose(out) + ATP + H2O = D-ribose(in) + ADP + phosphate + H(+). In terms of biological role, part of the ABC transporter complex RbsABC involved in ribose import. Responsible for energy coupling to the transport system. The chain is Ribose import ATP-binding protein RbsA from Roseobacter denitrificans (strain ATCC 33942 / OCh 114) (Erythrobacter sp. (strain OCh 114)).